The chain runs to 331 residues: Adenosine deaminase (331 aa).

Zn(2+) contacts are provided by histidine 12 and histidine 14. Substrate-binding residues include histidine 14, aspartate 16, and glycine 170. Histidine 197 is a Zn(2+) binding site. The active-site Proton donor is the glutamate 200. Position 278 (aspartate 278) interacts with Zn(2+). Aspartate 279 provides a ligand contact to substrate.

Belongs to the metallo-dependent hydrolases superfamily. Adenosine and AMP deaminases family. Adenosine deaminase subfamily. The cofactor is Zn(2+).

It catalyses the reaction adenosine + H2O + H(+) = inosine + NH4(+). The catalysed reaction is 2'-deoxyadenosine + H2O + H(+) = 2'-deoxyinosine + NH4(+). Its function is as follows. Catalyzes the hydrolytic deamination of adenosine and 2-deoxyadenosine. The chain is Adenosine deaminase from Shewanella baltica (strain OS223).